Consider the following 184-residue polypeptide: Prolyl-tRNA synthetase associated domain-containing protein 1 (184 aa).

Belongs to the PRORSD1 family.

The sequence is that of Prolyl-tRNA synthetase associated domain-containing protein 1 (Prorsd1) from Danio rerio (Zebrafish).